The sequence spans 175 residues: Probable chemoreceptor glutamine deamidase CheD (175 aa).

The protein belongs to the CheD family.

It catalyses the reaction L-glutaminyl-[protein] + H2O = L-glutamyl-[protein] + NH4(+). Probably deamidates glutamine residues to glutamate on methyl-accepting chemotaxis receptors (MCPs), playing an important role in chemotaxis. The sequence is that of Probable chemoreceptor glutamine deamidase CheD from Jannaschia sp. (strain CCS1).